The primary structure comprises 297 residues: MTSGANSSGSYLPSEIRSSKIDDNYLKELNEDLKLRKQELLEMLKPLEDKNNLLFQKLMSNLEEKQRSLQIMRQIMAGKGCEESSVMELLKEAEEMKQNLERKNKMLRKEMEMLWNKTFEAEELSDQQKAPQTKNKADLQDGKAPKSPSSPRKTESELEKSFAEKVKEIRKEKQQRKMEWVKYQEQNNILQNDFHGKVIELRIEALKNYQKANDLKLSLYLQQNFEPMQAFLNLPGSQGTMGITTMDRVTTGRNEHHVRILGTKIYTEQQGTKGSQLDNTGGRLFFLRSLPDEALKN.

Residues 83-117 (ESSVMELLKEAEEMKQNLERKNKMLRKEMEMLWNK) are a coiled coil. The disordered stretch occupies residues 122-161 (EELSDQQKAPQTKNKADLQDGKAPKSPSSPRKTESELEKS). Basic and acidic residues-rich tracts occupy residues 135–144 (NKADLQDGKA) and 152–161 (RKTESELEKS).

The polypeptide is Coiled-coil domain-containing protein 196 (Homo sapiens (Human)).